We begin with the raw amino-acid sequence, 358 residues long: MSKGLPETRTDAAMSELVPEPRPKPAVPMKPMSINSNLLGYIGIDTIIEQMRKKTMKTGFDFNIMVVGQSGLGKSTLVNTLFKSQVSRKASSWNREEKIPKTVEIKAIGHVIEEGGVKMKLTVIDTPGFGDQINNENCWEPIEKYINEQYEKFLKEEVNIARKKRIPDTRVHCCLYFISPTGHSLRPLDLEFMKHLSKVVNIIPVIAKADTMTLEEKSEFKQRVRKELEVNGIEFYPQKEFDEDLEDKTENDKIRQESMPFAVVGSDKEYQVNGKRVLGRKTPWGIIEVENLNHCEFALLRDFVIRTHLQDLKEVTHNIHYETYRAKRLNDNGGLPPGEGLLGTVLPPVPATPCPTAE.

Basic and acidic residues predominate over residues 1–10; the sequence is MSKGLPETRT. A disordered region spans residues 1–30; the sequence is MSKGLPETRTDAAMSELVPEPRPKPAVPMK. A Septin-type G domain is found at 58-331; the sequence is TGFDFNIMVV…ETYRAKRLND (274 aa). The interval 68–75 is G1 motif; the sequence is GQSGLGKS. 68–75 contributes to the GTP binding site; it reads GQSGLGKS. Position 91 is a phosphoserine (S91). A GTP-binding site is contributed by T102. The interval 125 to 128 is G3 motif; that stretch reads DTPG. Positions 207-210 are G4 motif; the sequence is AKAD. Residues 208–216, G265, and R280 each bind GTP; that span reads KADTMTLEE.

Belongs to the TRAFAC class TrmE-Era-EngA-EngB-Septin-like GTPase superfamily. Septin GTPase family. In terms of assembly, septins polymerize into heterooligomeric protein complexes that form filaments, and can associate with cellular membranes, actin filaments and microtubules. GTPase activity is required for filament formation. Post-translationally, phosphorylated by PKG on serine residues. Phosphorylated by PKG on Ser-91. In terms of tissue distribution, brain-specific.

It is found in the cytoplasm. The protein resides in the cytoskeleton. Its subcellular location is the synapse. Filament-forming cytoskeletal GTPase. May play a role in cytokinesis (Potential). The protein is Neuronal-specific septin-3 of Homo sapiens (Human).